The sequence spans 726 residues: Catalase-peroxidase (726 aa).

A disordered region spans residues 1 to 33 (MSTSDDIHNTTATGKCPFHQGGHDQSAGAGTTT). A cross-link (tryptophyl-tyrosyl-methioninium (Trp-Tyr) (with M-252)) is located at residues 105 to 226 (WHGAGTYRSI…LGATEMGLIY (122 aa)). Catalysis depends on H106, which acts as the Proton acceptor. Positions 226–252 (YVNPEGPDHSGEPLSAAAAIRATFGNM) form a cross-link, tryptophyl-tyrosyl-methioninium (Tyr-Met) (with W-105). H267 serves as a coordination point for heme b.

Belongs to the peroxidase family. Peroxidase/catalase subfamily. As to quaternary structure, homodimer or homotetramer. It depends on heme b as a cofactor. In terms of processing, formation of the three residue Trp-Tyr-Met cross-link is important for the catalase, but not the peroxidase activity of the enzyme.

The enzyme catalyses H2O2 + AH2 = A + 2 H2O. It carries out the reaction 2 H2O2 = O2 + 2 H2O. In terms of biological role, bifunctional enzyme with both catalase and broad-spectrum peroxidase activity. The protein is Catalase-peroxidase of Shigella flexneri.